The sequence spans 511 residues: Phosphomethylpyrimidine synthase (511 aa).

Substrate contacts are provided by residues Asn127, Met156, Tyr185, His221, 241-243 (SRG), 282-285 (DGLR), and Glu321. His325 contacts Zn(2+). Tyr348 provides a ligand contact to substrate. Residue His389 participates in Zn(2+) binding. 3 residues coordinate [4Fe-4S] cluster: Cys469, Cys472, and Cys477. The disordered stretch occupies residues 492-511 (KGMEEKSEVTICNRKKESGK).

The protein belongs to the ThiC family. The cofactor is [4Fe-4S] cluster.

It carries out the reaction 5-amino-1-(5-phospho-beta-D-ribosyl)imidazole + S-adenosyl-L-methionine = 4-amino-2-methyl-5-(phosphooxymethyl)pyrimidine + CO + 5'-deoxyadenosine + formate + L-methionine + 3 H(+). Its pathway is cofactor biosynthesis; thiamine diphosphate biosynthesis. Catalyzes the synthesis of the hydroxymethylpyrimidine phosphate (HMP-P) moiety of thiamine from aminoimidazole ribotide (AIR) in a radical S-adenosyl-L-methionine (SAM)-dependent reaction. This chain is Phosphomethylpyrimidine synthase, found in Leptospira borgpetersenii serovar Hardjo-bovis (strain JB197).